The primary structure comprises 259 residues: Aliphatic sulfonates import ATP-binding protein SsuB 2 (259 aa).

Positions 17–238 constitute an ABC transporter domain; that stretch reads LDILGLWKGF…VRSSQAFTSI (222 aa). ATP is bound at residue 49-56; that stretch reads GRSGCGKS.

It belongs to the ABC transporter superfamily. Aliphatic sulfonates importer (TC 3.A.1.17.2) family. The complex is composed of two ATP-binding proteins (SsuB), two transmembrane proteins (SsuC) and a solute-binding protein (SsuA).

The protein resides in the cell inner membrane. The catalysed reaction is ATP + H2O + aliphatic sulfonate-[sulfonate-binding protein]Side 1 = ADP + phosphate + aliphatic sulfonateSide 2 + [sulfonate-binding protein]Side 1.. Functionally, part of the ABC transporter complex SsuABC involved in aliphatic sulfonates import. Responsible for energy coupling to the transport system. The protein is Aliphatic sulfonates import ATP-binding protein SsuB 2 of Agrobacterium fabrum (strain C58 / ATCC 33970) (Agrobacterium tumefaciens (strain C58)).